The following is a 504-amino-acid chain: DnaJ homolog subfamily C member 3 (504 aa).

Residues 1 to 31 (MVAPGSVRSRLGAVFPFLLVLVDLQYEGAEC) form the signal peptide. TPR repeat units lie at residues 37-70 (VEKH…DPDN), 72-104 (IAYY…KMDF), 105-138 (TAAR…NPSE), 154-187 (MQRL…CVWD), 188-221 (AELR…KNDN), 222-255 (TEAF…DQDH), 268-301 (LNKL…EPSV), 306-339 (VRSK…EPDN), and 340-373 (VNAL…NEND). An intrachain disulfide couples Cys248 to Cys258. A Phosphoserine modification is found at Ser274. Cys313 and Cys329 are joined by a disulfide. The flexible linker stretch occupies residues 375-393 (QIREGLEKAQRLLKQSQKR). One can recognise a J domain in the interval 394-462 (DYYKILGVKR…EMRRKFDDGE (69 aa)). The segment at 451-481 (DPEMRRKFDDGEDPLDAETQQGGGSNPFHRS) is disordered. Ser475 is modified (phosphoserine).

Interacts with EIF2AK2 and EIF2AK3. Forms a trimeric complex with DNAJB1 and HSPA8. Interacts with THAP12.

It localises to the endoplasmic reticulum. Involved in the unfolded protein response (UPR) during ER stress. Co-chaperone of HSPA8/HSC70, it stimulates its ATPase activity. May inhibit both the autophosphorylation of EIF2AK2/PKR and the ability of EIF2AK2 to catalyze phosphorylation of the EIF2A. May inhibit EIF2AK3/PERK activity. The chain is DnaJ homolog subfamily C member 3 (Dnajc3) from Rattus norvegicus (Rat).